A 119-amino-acid chain; its full sequence is Protein MGF 110-13L-B (119 aa).

A signal peptide spans Met1–Pro16.

The protein belongs to the asfivirus MGF 110 family.

The polypeptide is Protein MGF 110-13L-B (Ornithodoros (relapsing fever ticks)).